The following is a 301-amino-acid chain: MTTLDDKLLGEKLQYYYSSSEDEDSDHEDKDRGRCAPASSSVPAEAELAGEGISVNTGPKGVINDWRRFKQLETEQREEQCREMERLIKKLSMTCRSHLDEEEEQQKQKDLQEKISGKMTLKEFAIMNEDQDDEEFLQQYRKQRMEEMRQQLHKGPQFKQVFEISSGEGFLDMIDKEQKSIVIMVHIYEDGIPGTEAMNGCMICLAAEYPAVKFCKVKSSVIGASSQFTRNALPALLIYKGGELIGNFVRVTDQLGDDFFAVDLEAFLQEFGLLPEKEVLVLTSVRNSATCHSEDSDLEID.

At T2 the chain carries N-acetylthreonine. The disordered stretch occupies residues 18 to 57 (SSSEDEDSDHEDKDRGRCAPASSSVPAEAELAGEGISVNT). Phosphoserine is present on residues S20 and S25. Over residues 36–49 (APASSSVPAEAELA) the composition is skewed to low complexity. Residues 36–299 (APASSSVPAE…TCHSEDSDLE (264 aa)) enclose the Phosducin domain. Phosphoserine is present on residues S226, S293, and S296.

This sequence belongs to the phosducin family. Forms a complex with the beta and gamma subunits of the GTP-binding protein, transducin. Interacts with the CCT chaperonin complex.

Its subcellular location is the cell projection. The protein localises to the cilium. Its function is as follows. Acts as a positive regulator of hedgehog signaling and regulates ciliary function. In terms of biological role, functions as a co-chaperone for CCT in the assembly of heterotrimeric G protein complexes, facilitates the assembly of both Gbeta-Ggamma and RGS-Gbeta5 heterodimers. Functionally, acts as a negative regulator of heterotrimeric G proteins assembly by trapping the preloaded G beta subunits inside the CCT chaperonin. This Homo sapiens (Human) protein is Phosducin-like protein (PDCL).